We begin with the raw amino-acid sequence, 224 residues long: MVMVMEKKPYIISNVGMTLDGKLATINNDSRISCEEDLIRVHKIRANVDGIMVGIGTVLKDDPRLTVHKIKSDRNPVRIVVDSKLRVPLNARVLNKDAKTIIATTEDTNEEKEKKIKILEDMGVEVVKCGRGKVDLKKLMDILYDKGIKSILLEGGGTLNWGMFKEGLVDEVSVYIAPKIFGGKEAPTYVDGEGFKTVDECVKLELKNFYRLGEGIVLEFKVKK.

NADP(+) contacts are provided by residues G16, T57, D61, 83–86, V134, and 156–159; these read SKLR and GGTL.

The protein belongs to the HTP reductase family. In terms of assembly, homodimer.

It catalyses the reaction 2,5-diamino-6-(1-D-ribitylamino)pyrimidin-4(3H)-one 5'-phosphate + NADP(+) = 2,5-diamino-6-(1-D-ribosylamino)pyrimidin-4(3H)-one 5'-phosphate + NADPH + H(+). The catalysed reaction is 2,5-diamino-6-(1-D-ribitylamino)pyrimidin-4(3H)-one 5'-phosphate + NAD(+) = 2,5-diamino-6-(1-D-ribosylamino)pyrimidin-4(3H)-one 5'-phosphate + NADH + H(+). Its pathway is cofactor biosynthesis; riboflavin biosynthesis. Catalyzes an early step in riboflavin biosynthesis, the NAD(P)H-dependent reduction of the ribose side chain of 2,5-diamino-6-ribosylamino-4(3H)-pyrimidinone 5'-phosphate, yielding 2,5-diamino-6-ribitylamino-4(3H)-pyrimidinone 5'-phosphate. The beta anomer is the authentic substrate, and the alpha anomer can serve as substrate subsequent to spontaneous anomerization. NADPH and NADH function equally well as the reductants. Does not catalyze the reduction of 5-amino-6-(5-phospho-D-ribosylamino)uracil to 5-amino-6-(5-phospho-D-ribitylamino)uracil. The polypeptide is 2,5-diamino-6-ribosylamino-4(3H)-pyrimidinone 5'-phosphate reductase (arfC) (Methanocaldococcus jannaschii (strain ATCC 43067 / DSM 2661 / JAL-1 / JCM 10045 / NBRC 100440) (Methanococcus jannaschii)).